The sequence spans 177 residues: Dihydrofolate reductase (177 aa).

The enzyme catalyses (6S)-5,6,7,8-tetrahydrofolate + NADP(+) = 7,8-dihydrofolate + NADPH + H(+). Functionally, provides the tetrahydrofolates necessary for the synthesis of nucleotides and amino acids. Bacteriophage T5 induces high levels of dihydrofolate reductase in the host cell, probably for the viral replication. This Escherichia phage T5 (Enterobacteria phage T5) protein is Dihydrofolate reductase.